The primary structure comprises 303 residues: Acetylglutamate kinase (303 aa).

Residues 69 to 70, Arg-91, and Asn-201 each bind substrate; that span reads GG.

The protein belongs to the acetylglutamate kinase family. ArgB subfamily.

The protein localises to the cytoplasm. The enzyme catalyses N-acetyl-L-glutamate + ATP = N-acetyl-L-glutamyl 5-phosphate + ADP. Its pathway is amino-acid biosynthesis; L-arginine biosynthesis; N(2)-acetyl-L-ornithine from L-glutamate: step 2/4. Its function is as follows. Catalyzes the ATP-dependent phosphorylation of N-acetyl-L-glutamate. In Novosphingobium aromaticivorans (strain ATCC 700278 / DSM 12444 / CCUG 56034 / CIP 105152 / NBRC 16084 / F199), this protein is Acetylglutamate kinase.